A 515-amino-acid chain; its full sequence is Putative ribose/galactose/methyl galactoside import ATP-binding protein (515 aa).

2 ABC transporter domains span residues 26–262 and 272–511; these read LEVA…VGRE and VALG…KIMD. Residue 58-65 coordinates ATP; that stretch reads GENGAGKS.

Belongs to the ABC transporter superfamily. Carbohydrate importer 2 (CUT2) (TC 3.A.1.2) family.

The protein localises to the cell inner membrane. It carries out the reaction D-ribose(out) + ATP + H2O = D-ribose(in) + ADP + phosphate + H(+). The catalysed reaction is D-galactose(out) + ATP + H2O = D-galactose(in) + ADP + phosphate + H(+). In terms of biological role, part of an ABC transporter complex involved in carbohydrate import. Could be involved in ribose, galactose and/or methyl galactoside import. Responsible for energy coupling to the transport system. The protein is Putative ribose/galactose/methyl galactoside import ATP-binding protein of Hahella chejuensis (strain KCTC 2396).